Reading from the N-terminus, the 152-residue chain is Deoxyuridine 5'-triphosphate nucleotidohydrolase (152 aa).

Substrate contacts are provided by residues Arg71–Gly73, Asn84, Leu88–Asp90, and Met98.

Belongs to the dUTPase family. Requires Mg(2+) as cofactor.

The catalysed reaction is dUTP + H2O = dUMP + diphosphate + H(+). It participates in pyrimidine metabolism; dUMP biosynthesis; dUMP from dCTP (dUTP route): step 2/2. Functionally, this enzyme is involved in nucleotide metabolism: it produces dUMP, the immediate precursor of thymidine nucleotides and it decreases the intracellular concentration of dUTP so that uracil cannot be incorporated into DNA. The chain is Deoxyuridine 5'-triphosphate nucleotidohydrolase from Shewanella pealeana (strain ATCC 700345 / ANG-SQ1).